The primary structure comprises 942 residues: Endoprotease bli-4 (942 aa).

Residues Met1–Thr22 form the signal peptide. A propeptide spanning residues Ile23–Arg116 is cleaved from the precursor. Residues Asp117–Ser871 are Lumenal-facing. Asp124 provides a ligand contact to Ca(2+). Residues Pro130–Phe160 form a disordered region. Residues Gln168 to Val483 form the Peptidase S8 domain. A glycan (N-linked (GlcNAc...) asparagine) is linked at Asn195. Catalysis depends on Asp202, which acts as the Charge relay system. Residue Asp203 coordinates substrate. Ca(2+)-binding residues include Asp211, Asp223, Asp228, and Asp230. The segment at Asp211–Gly242 is disordered. Residue Asp238 to Asn239 coordinates substrate. His241 functions as the Charge relay system in the catalytic mechanism. Residues Leu252, Asn255, Gln257, and Gly259 each coordinate Ca(2+). 2 disulfides stabilise this stretch: Cys258–Cys407 and Cys350–Cys380. Residues Glu283, Ser300–Asp305, Asp311, and Ala339–Asn342 each bind substrate. Asp305 is a Ca(2+) binding site. Asp348 provides a ligand contact to Ca(2+). Substrate-binding residues include Asp353 and Tyr355. Glu378 serves as a coordination point for Ca(2+). Ser415 (charge relay system) is an active-site residue. Residue Ser415 participates in substrate binding. Positions Thr491–Pro629 constitute a P/Homo B domain. An intrachain disulfide couples Cys498 to Cys527. Asn519 is a glycosylation site (N-linked (GlcNAc...) asparagine). FU repeat units lie at residues Asn674 to Asp723, Asp725 to Asp777, and Gly804 to Ser850. The N-linked (GlcNAc...) asparagine glycan is linked to Asn868. A helical membrane pass occupies residues Gly872–Cys892. The Cytoplasmic segment spans residues Lys893–Val942. A disordered region spans residues Gly922–Val942. Positions Asp926–Val935 are enriched in acidic residues.

Belongs to the peptidase S8 family. Furin subfamily. Requires Ca(2+) as cofactor. In larvae and adults, expressed in all hypodermal cells, vulva and ventral nerve cords. In terms of tissue distribution, most highly expressed isoform in the embryonic epidermis. As to expression, expressed primarily in the germline. Expressed primarily in pharyngeal epithelial cells.

It is found in the membrane. Serine endoprotease which cleaves proproteins at paired basic amino acids at the consensus RX(K/R)R motif. Involved in N-terminal processing of cuticle collagens and plays a role in cuticle biosynthesis. May cleave both sqt-3 and dpy-17 collagens to promote their secretion. Acts in ASEL sensory neurons to regulate high salt chemotaxis responses probably by cleaving insulin-like protein ins-6 into its mature and active form. Essential for embryonic and larval development. Its function is as follows. Involved in cuticle biosynthesis but dispensable for larval development. This is Endoprotease bli-4 (bli-4) from Caenorhabditis elegans.